The chain runs to 415 residues: Esterase FrsA (415 aa).

Belongs to the FrsA family.

It catalyses the reaction a carboxylic ester + H2O = an alcohol + a carboxylate + H(+). Functionally, catalyzes the hydrolysis of esters. The chain is Esterase FrsA from Yersinia enterocolitica serotype O:8 / biotype 1B (strain NCTC 13174 / 8081).